The sequence spans 228 residues: L-ribulose-5-phosphate 4-epimerase UlaF (228 aa).

Substrate is bound by residues 26–27 (GN), 43–44 (SG), and 72–73 (SS). Zn(2+) is bound by residues Asp74, His93, and His95. Asp118 (proton donor/acceptor) is an active-site residue. His167 provides a ligand contact to Zn(2+). The active-site Proton donor/acceptor is Tyr225.

Belongs to the aldolase class II family. AraD/FucA subfamily. Zn(2+) serves as cofactor.

It catalyses the reaction L-ribulose 5-phosphate = D-xylulose 5-phosphate. Its pathway is cofactor degradation; L-ascorbate degradation; D-xylulose 5-phosphate from L-ascorbate: step 4/4. Functionally, catalyzes the isomerization of L-ribulose 5-phosphate to D-xylulose 5-phosphate. Is involved in the anaerobic L-ascorbate utilization. The chain is L-ribulose-5-phosphate 4-epimerase UlaF from Escherichia coli O139:H28 (strain E24377A / ETEC).